The sequence spans 359 residues: Histidinol-phosphate aminotransferase (359 aa).

Lysine 217 carries the post-translational modification N6-(pyridoxal phosphate)lysine.

Belongs to the class-II pyridoxal-phosphate-dependent aminotransferase family. Histidinol-phosphate aminotransferase subfamily. Homodimer. Pyridoxal 5'-phosphate serves as cofactor.

It catalyses the reaction L-histidinol phosphate + 2-oxoglutarate = 3-(imidazol-4-yl)-2-oxopropyl phosphate + L-glutamate. It participates in amino-acid biosynthesis; L-histidine biosynthesis; L-histidine from 5-phospho-alpha-D-ribose 1-diphosphate: step 7/9. The polypeptide is Histidinol-phosphate aminotransferase (Salmonella typhi).